A 155-amino-acid polypeptide reads, in one-letter code: Ribosomal RNA large subunit methyltransferase H (155 aa).

Residues Leu-72, Gly-103, and 122 to 127 (LSDLTL) contribute to the S-adenosyl-L-methionine site.

This sequence belongs to the RNA methyltransferase RlmH family. As to quaternary structure, homodimer.

It localises to the cytoplasm. It carries out the reaction pseudouridine(1915) in 23S rRNA + S-adenosyl-L-methionine = N(3)-methylpseudouridine(1915) in 23S rRNA + S-adenosyl-L-homocysteine + H(+). In terms of biological role, specifically methylates the pseudouridine at position 1915 (m3Psi1915) in 23S rRNA. This Albidiferax ferrireducens (strain ATCC BAA-621 / DSM 15236 / T118) (Rhodoferax ferrireducens) protein is Ribosomal RNA large subunit methyltransferase H.